The chain runs to 334 residues: Trans-1,2-dihydrobenzene-1,2-diol dehydrogenase (334 aa).

This sequence belongs to the Gfo/Idh/MocA family. In terms of assembly, homodimer.

The catalysed reaction is (1R,2R)-1,2-dihydrobenzene-1,2-diol + NADP(+) = catechol + NADPH + H(+). It catalyses the reaction D-xylose + NADP(+) = D-xylono-1,5-lactone + NADPH + H(+). The sequence is that of Trans-1,2-dihydrobenzene-1,2-diol dehydrogenase (dhdh) from Danio rerio (Zebrafish).